The chain runs to 221 residues: Ras-related protein Rab-28 (221 aa).

An N-acetylserine modification is found at S2. S8 bears the Phosphoserine mark. GTP contacts are provided by G21, G24, K25, T26, S27, G38, K39, Y41, and T44. T26 is a Mg(2+) binding site. Residues 35–49 (ETFGKRYKQTIGLDF) form a switch I region. Mg(2+) is bound by residues T44 and D68. The segment at 68 to 85 (DIGGQTIGGKMLDKYIYG) is switch II. GTP contacts are provided by G71, N129, K130, D132, A160, and K161. Cysteine methyl ester is present on C218. A lipid anchor (S-farnesyl cysteine) is attached at C218. Residues 219–221 (AVQ) constitute a propeptide, removed in mature form.

It belongs to the small GTPase superfamily. Rab family. In terms of assembly, interacts (prenylated form) with PDE6D; the interaction promotes RAB28 delivery to the photoreceptor outer segments. Interacts with KCNJ13; the interaction may facilitate cone outer segments phagocytosis. Also participates in nuclear factor kappa-B p65/RELA nuclear transport in endothelial cells. Mg(2+) serves as cofactor. Post-translationally, isoprenylated.

The protein resides in the cell membrane. The protein localises to the cytoplasm. It localises to the cytoskeleton. Its subcellular location is the cilium basal body. It is found in the nucleus. It catalyses the reaction GTP + H2O = GDP + phosphate + H(+). Its activity is regulated as follows. Regulated by guanine nucleotide exchange factors (GEFs) which promote the exchange of bound GDP for free GTP. Regulated by GTPase activating proteins (GAPs) which increase the GTP hydrolysis activity. Inhibited by GDP dissociation inhibitors (GDIs). Functionally, the small GTPases Rab are key regulators of intracellular membrane trafficking, from the formation of transport vesicles to their fusion with membranes. Rabs cycle between an inactive GDP-bound form and an active GTP-bound form that is able to recruit to membranes different sets of downstream effectors directly responsible for vesicle formation, movement, tethering and fusion. RAB28 is required for shedding and phagocytosis of cone cell outer segments (OS) discs in the retina. Also participates in nuclear factor kappa-B p65/RELA nuclear transport in endothelial cells. This chain is Ras-related protein Rab-28 (RAB28), found in Pongo abelii (Sumatran orangutan).